The chain runs to 790 residues: PAN2-PAN3 deadenylation complex subunit PAN3 (790 aa).

Disordered regions lie at residues 166-191 and 235-259; these read IAQQ…AVSA and AMIS…ASPI. Residues 168–191 show a composition bias toward low complexity; that stretch reads QQQPQHPQKQQQHPPSVGGGAVSA. Residues 369-655 are pseudokinase domain; that stretch reads DAAEAAQHAL…SVTDLMPMIG (287 aa). ATP contacts are provided by residues arginine 423, 472–479, and 552–553; these read DYHPGSQT and TK. The stretch at 656-694 forms a coiled coil; that stretch reads ARFYTQLDALQSKIDMQEDELAKEMENGRLYRILVKLNS. Residues 695–790 form a knob domain region; it reads INERPDFNLD…FSELMSSAAN (96 aa).

This sequence belongs to the protein kinase superfamily. PAN3 family. Homodimer. Forms a heterotrimer with a catalytic subunit PAN2 to form the poly(A)-nuclease (PAN) deadenylation complex. Interacts (via PAM-2 motif) with poly(A)-binding protein (via PABC domain), conferring substrate specificity of the enzyme complex. Interacts with the GW182 family protein gw. Interacts with Gyf.

The protein resides in the cytoplasm. Its subcellular location is the P-body. In terms of biological role, regulatory subunit of the poly(A)-nuclease (PAN) deadenylation complex, one of two cytoplasmic mRNA deadenylases involved in general and miRNA-mediated mRNA turnover. PAN specifically shortens poly(A) tails of RNA and the activity is stimulated by poly(A)-binding protein (PABP). PAN deadenylation is followed by rapid degradation of the shortened mRNA tails by the CCR4-NOT complex. Deadenylated mRNAs are then degraded by two alternative mechanisms, namely exosome-mediated 3'-5' exonucleolytic degradation, or deadenylation-dependent mRNA decaping and subsequent 5'-3' exonucleolytic degradation by XRN1. PAN3 acts as a positive regulator for PAN activity, recruiting the catalytic subunit PAN2 to mRNA via its interaction with RNA and PABP, and to miRNA targets via its interaction with GW182 family proteins. The polypeptide is PAN2-PAN3 deadenylation complex subunit PAN3 (Drosophila melanogaster (Fruit fly)).